The following is a 111-amino-acid chain: Distal membrane-arm assembly complex protein 1 (111 aa).

The span at 1–11 shows a compositional bias: polar residues; it reads MGSSFSGSTEF. Residues 1-40 form a disordered region; that stretch reads MGSSFSGSTEFSAPAPPTVSTAVPANPPAKSAVPASPARD. Residues 18 to 38 are compositionally biased toward low complexity; that stretch reads TVSTAVPANPPAKSAVPASPA. Helical transmembrane passes span 51–68 and 81–101; these read VLSGSTLFGAGTYVYLVA and GTVLQMVIGISIACWGVVVLV.

Interacts with incompletely assembled mitochondrial NADH:ubiquinone oxidoreductase complex (complex I).

It is found in the mitochondrion inner membrane. In terms of biological role, required for the assembly of the mitochondrial NADH:ubiquinone oxidoreductase complex (complex I). Involved in the assembly of the distal region of complex I. This chain is Distal membrane-arm assembly complex protein 1, found in Mus musculus (Mouse).